The chain runs to 296 residues: Protein-export membrane protein SecF (296 aa).

The next 6 membrane-spanning stretches (helical) occupy residues 23 to 43 (MIIY…ANYV), 144 to 164 (AIVY…RVPV), 169 to 189 (VVFS…IFGI), 194 to 214 (ATIA…ILLT), 236 to 256 (GFTM…FSTA), and 265 to 285 (VLIF…AGVL).

This sequence belongs to the SecD/SecF family. SecF subfamily. As to quaternary structure, part of the protein translocation apparatus. Forms a complex with SecD.

The protein localises to the cell membrane. Functionally, involved in protein export. In Pyrococcus furiosus (strain ATCC 43587 / DSM 3638 / JCM 8422 / Vc1), this protein is Protein-export membrane protein SecF.